The following is an 848-amino-acid chain: ATP-dependent Clp protease ATP-binding subunit ClpC1 (848 aa).

A Clp R domain is found at 2-144 (FERFTDRARK…RQQVIQLLSG (143 aa)). 2 repeat regions span residues 5–70 (FTDR…IGQG) and 80–144 (FTPR…LLSG). Positions 171–418 (LDQFGRNLTA…RMRIRRMTAP (248 aa)) are i. 216–223 (GEPGVGKT) is an ATP binding site. One can recognise a UVR domain in the interval 425 to 460 (DEKIAEARREKESAIDAQDFEKAASLRDREKTLVAQ). The II stretch occupies residues 479–670 (VDDEQIAEVL…VLIFTSNLGT (192 aa)). 553–560 (GPSGVGKT) serves as a coordination point for ATP. The segment at 821 to 848 (TGTRKPPAEPDLAKAGAHSAGGPEPAAR) is disordered.

This sequence belongs to the ClpA/ClpB family. ClpC subfamily.

Functionally, ATP-dependent specificity component of the Clp protease. It directs the protease to specific substrates. Can perform chaperone functions in the absence of ClpP. This Mycobacterium tuberculosis (strain CDC 1551 / Oshkosh) protein is ATP-dependent Clp protease ATP-binding subunit ClpC1 (clpC1).